Consider the following 336-residue polypeptide: Aspartate carbamoyltransferase catalytic subunit (336 aa).

Residues R71 and T72 each contribute to the carbamoyl phosphate site. K99 is a binding site for L-aspartate. The carbamoyl phosphate site is built by R121, H151, and Q154. L-aspartate contacts are provided by R184 and R239. The carbamoyl phosphate site is built by G280 and P281.

The protein belongs to the aspartate/ornithine carbamoyltransferase superfamily. ATCase family. As to quaternary structure, heterododecamer (2C3:3R2) of six catalytic PyrB chains organized as two trimers (C3), and six regulatory PyrI chains organized as three dimers (R2).

It catalyses the reaction carbamoyl phosphate + L-aspartate = N-carbamoyl-L-aspartate + phosphate + H(+). It participates in pyrimidine metabolism; UMP biosynthesis via de novo pathway; (S)-dihydroorotate from bicarbonate: step 2/3. Its function is as follows. Catalyzes the condensation of carbamoyl phosphate and aspartate to form carbamoyl aspartate and inorganic phosphate, the committed step in the de novo pyrimidine nucleotide biosynthesis pathway. In Azotobacter vinelandii (strain DJ / ATCC BAA-1303), this protein is Aspartate carbamoyltransferase catalytic subunit.